Here is a 1216-residue protein sequence, read N- to C-terminus: ATP-dependent DNA helicase Q4 (1216 aa).

Disordered stretches follow at residues glutamate 72–leucine 100 and asparagine 113–glycine 171. Composition is skewed to polar residues over residues alanine 86 to leucine 100 and leucine 114 to threonine 137. Residues serine 179 and serine 181 each carry the phosphoserine modification. The interval serine 235–leucine 340 is disordered. Polar residues-rich tracts occupy residues glutamine 248–serine 262 and threonine 306–alanine 320. Residues aspartate 393–glutamine 410 form a CCHC-type zinc finger. The segment at alanine 436–leucine 458 is disordered. The Helicase ATP-binding domain maps to isoleucine 506–phenylalanine 684. Leucine 519–serine 526 contacts ATP. A DEAH box motif is present at residues aspartate 627 to histidine 630. The 168-residue stretch at aspartate 705–phenylalanine 872 folds into the Helicase C-terminal domain. 4 residues coordinate Zn(2+): cysteine 875, cysteine 877, cysteine 906, and histidine 909.

It belongs to the helicase family. RecQ subfamily. Interacts with UBR1 and UBR2. Interacts with MCM10; this interaction regulates RECQL4 unwinding activity. Interacts with TOPBP1. It depends on Zn(2+) as a cofactor.

The protein localises to the cytoplasm. It localises to the nucleus. It carries out the reaction Couples ATP hydrolysis with the unwinding of duplex DNA by translocating in the 3'-5' direction.. The catalysed reaction is ATP + H2O = ADP + phosphate + H(+). Its function is as follows. An ATP-dependent DNA helicase which unwinds dsDNA with a 3'-overhang in a 3'-5' direction. May play a role in development of the palate and the limbs. May modulate chromosome segregation. The sequence is that of ATP-dependent DNA helicase Q4 (Recql4) from Mus musculus (Mouse).